The sequence spans 187 residues: 1,6-anhydro-N-acetylmuramyl-L-alanine amidase AmpD (187 aa).

In terms of domain architecture, N-acetylmuramoyl-L-alanine amidase spans Thr29–Pro167. His34 is a Zn(2+) binding site. Catalysis depends on Glu116, which acts as the Proton acceptor. Zn(2+) contacts are provided by His154 and Asp164.

Belongs to the N-acetylmuramoyl-L-alanine amidase 2 family. Zn(2+) is required as a cofactor.

The protein resides in the cytoplasm. The catalysed reaction is Hydrolyzes the link between N-acetylmuramoyl residues and L-amino acid residues in certain cell-wall glycopeptides.. In terms of biological role, involved in cell wall peptidoglycan recycling. Specifically cleaves the amide bond between the lactyl group of N-acetylmuramic acid and the alpha-amino group of the L-alanine in degradation products containing an anhydro N-acetylmuramyl moiety. The chain is 1,6-anhydro-N-acetylmuramyl-L-alanine amidase AmpD from Enterobacter cloacae.